Consider the following 227-residue polypeptide: Cytochrome c oxidase subunit 2 (227 aa).

At 1-14 (MAYPMQLGFQDATS) the chain is on the mitochondrial intermembrane side. Residues 15–45 (PIMEELLHFHDHTLMIVLLISSLVLYIISLM) traverse the membrane as a helical segment. The Mitochondrial matrix portion of the chain corresponds to 46-59 (LTTKLTHTSTMDAQ). A helical membrane pass occupies residues 60–87 (EVETIWTILPAIILILIALPSLRILYMM). Over 88–227 (DEINNPSLTV…YFEKWSASML (140 aa)) the chain is Mitochondrial intermembrane. The Cu cation site is built by histidine 161, cysteine 196, glutamate 198, cysteine 200, histidine 204, and methionine 207. Glutamate 198 is a Mg(2+) binding site. Residue tyrosine 218 is modified to Phosphotyrosine.

It belongs to the cytochrome c oxidase subunit 2 family. As to quaternary structure, component of the cytochrome c oxidase (complex IV, CIV), a multisubunit enzyme composed of 14 subunits. The complex is composed of a catalytic core of 3 subunits MT-CO1, MT-CO2 and MT-CO3, encoded in the mitochondrial DNA, and 11 supernumerary subunits COX4I, COX5A, COX5B, COX6A, COX6B, COX6C, COX7A, COX7B, COX7C, COX8 and NDUFA4, which are encoded in the nuclear genome. The complex exists as a monomer or a dimer and forms supercomplexes (SCs) in the inner mitochondrial membrane with NADH-ubiquinone oxidoreductase (complex I, CI) and ubiquinol-cytochrome c oxidoreductase (cytochrome b-c1 complex, complex III, CIII), resulting in different assemblies (supercomplex SCI(1)III(2)IV(1) and megacomplex MCI(2)III(2)IV(2)). Found in a complex with TMEM177, COA6, COX18, COX20, SCO1 and SCO2. Interacts with TMEM177 in a COX20-dependent manner. Interacts with COX20. Interacts with COX16. Requires Cu cation as cofactor.

Its subcellular location is the mitochondrion inner membrane. The enzyme catalyses 4 Fe(II)-[cytochrome c] + O2 + 8 H(+)(in) = 4 Fe(III)-[cytochrome c] + 2 H2O + 4 H(+)(out). Its function is as follows. Component of the cytochrome c oxidase, the last enzyme in the mitochondrial electron transport chain which drives oxidative phosphorylation. The respiratory chain contains 3 multisubunit complexes succinate dehydrogenase (complex II, CII), ubiquinol-cytochrome c oxidoreductase (cytochrome b-c1 complex, complex III, CIII) and cytochrome c oxidase (complex IV, CIV), that cooperate to transfer electrons derived from NADH and succinate to molecular oxygen, creating an electrochemical gradient over the inner membrane that drives transmembrane transport and the ATP synthase. Cytochrome c oxidase is the component of the respiratory chain that catalyzes the reduction of oxygen to water. Electrons originating from reduced cytochrome c in the intermembrane space (IMS) are transferred via the dinuclear copper A center (CU(A)) of subunit 2 and heme A of subunit 1 to the active site in subunit 1, a binuclear center (BNC) formed by heme A3 and copper B (CU(B)). The BNC reduces molecular oxygen to 2 water molecules using 4 electrons from cytochrome c in the IMS and 4 protons from the mitochondrial matrix. In Bubalus depressicornis (Lowland anoa), this protein is Cytochrome c oxidase subunit 2 (MT-CO2).